The following is a 154-amino-acid chain: NADPH-dependent 7-cyano-7-deazaguanine reductase (154 aa).

Residues 1–13 show a composition bias toward polar residues; it reads MSKTDVSGLSQLG. The segment at 1–24 is disordered; sequence MSKTDVSGLSQLGRQVDAPTSPET. The active-site Thioimide intermediate is the Cys-52. Asp-59 (proton donor) is an active-site residue. Substrate contacts are provided by residues 74 to 76 and 93 to 94; these read VES and HE.

This sequence belongs to the GTP cyclohydrolase I family. QueF type 1 subfamily.

The protein localises to the cytoplasm. The catalysed reaction is 7-aminomethyl-7-carbaguanine + 2 NADP(+) = 7-cyano-7-deazaguanine + 2 NADPH + 3 H(+). Its pathway is tRNA modification; tRNA-queuosine biosynthesis. Its function is as follows. Catalyzes the NADPH-dependent reduction of 7-cyano-7-deazaguanine (preQ0) to 7-aminomethyl-7-deazaguanine (preQ1). This Allorhizobium ampelinum (strain ATCC BAA-846 / DSM 112012 / S4) (Agrobacterium vitis (strain S4)) protein is NADPH-dependent 7-cyano-7-deazaguanine reductase.